The sequence spans 477 residues: Glycogen synthase (477 aa).

Residue lysine 15 participates in ADP-alpha-D-glucose binding.

The protein belongs to the glycosyltransferase 1 family. Bacterial/plant glycogen synthase subfamily.

It catalyses the reaction [(1-&gt;4)-alpha-D-glucosyl](n) + ADP-alpha-D-glucose = [(1-&gt;4)-alpha-D-glucosyl](n+1) + ADP + H(+). It participates in glycan biosynthesis; glycogen biosynthesis. Its function is as follows. Synthesizes alpha-1,4-glucan chains using ADP-glucose. The chain is Glycogen synthase from Halorhodospira halophila (strain DSM 244 / SL1) (Ectothiorhodospira halophila (strain DSM 244 / SL1)).